Reading from the N-terminus, the 316-residue chain is Serine protease 45 (316 aa).

Positions 1-38 are cleaved as a signal peptide; that stretch reads MAASLSRLSAGLAASRPLGLSRSFLLLVLLLLNSGYKG. In terms of domain architecture, Peptidase S1 spans 49 to 290; sequence WWPKNLDLSR…YSRWIKKQIS (242 aa). An intrachain disulfide couples cysteine 74 to cysteine 90. Histidine 89 (charge relay system) is an active-site residue. An N-linked (GlcNAc...) asparagine glycan is attached at asparagine 110. Aspartate 137 functions as the Charge relay system in the catalytic mechanism. 2 N-linked (GlcNAc...) asparagine glycosylation sites follow: asparagine 162 and asparagine 186. 3 disulfide bridges follow: cysteine 171/cysteine 248, cysteine 206/cysteine 229, and cysteine 238/cysteine 266. The active-site Charge relay system is the serine 242.

Belongs to the peptidase S1 family.

Its subcellular location is the secreted. This Bos taurus (Bovine) protein is Serine protease 45 (PRSS45).